We begin with the raw amino-acid sequence, 852 residues long: Translation initiation factor IF-2 (852 aa).

The segment at 1 to 240 (MEDKNKTIKE…KTSSDKRDFS (240 aa)) is disordered. Positions 78–90 (KEVKYEESSRKQD) are enriched in basic and acidic residues. Polar residues predominate over residues 106 to 120 (VRPSGDSSYPVSRSP). A compositionally biased stretch (gly residues) spans 150 to 200 (RGPGQGGGYQGNRGPGQGGGYQGNRGPGQQTGPGNRFGGSGPGNRSGGPGG). The segment covering 227 to 240 (HDKEKTSSDKRDFS) has biased composition (basic and acidic residues). Positions 347 to 516 (NRPPVVTIMG…LLQAEVMDLK (170 aa)) constitute a tr-type G domain. A G1 region spans residues 356-363 (GHVDHGKT). A GTP-binding site is contributed by 356-363 (GHVDHGKT). Residues 381 to 385 (GITQH) are G2. Positions 402 to 405 (DTPG) are G3. GTP is bound by residues 402–406 (DTPGH) and 456–459 (NKID). Residues 456-459 (NKID) form a G4 region. The tract at residues 492 to 494 (SAR) is G5.

This sequence belongs to the TRAFAC class translation factor GTPase superfamily. Classic translation factor GTPase family. IF-2 subfamily.

The protein resides in the cytoplasm. Functionally, one of the essential components for the initiation of protein synthesis. Protects formylmethionyl-tRNA from spontaneous hydrolysis and promotes its binding to the 30S ribosomal subunits. Also involved in the hydrolysis of GTP during the formation of the 70S ribosomal complex. The chain is Translation initiation factor IF-2 from Leptospira borgpetersenii serovar Hardjo-bovis (strain JB197).